We begin with the raw amino-acid sequence, 427 residues long: Histidinol dehydrogenase (427 aa).

Residues Ser232, Gln254, and His257 each coordinate substrate. 2 residues coordinate Zn(2+): Gln254 and His257. Catalysis depends on proton acceptor residues Glu322 and His323. Substrate-binding residues include His323, Asp356, Glu410, and His415. Position 356 (Asp356) interacts with Zn(2+). Zn(2+) is bound at residue His415.

Belongs to the histidinol dehydrogenase family. Requires Zn(2+) as cofactor.

The enzyme catalyses L-histidinol + 2 NAD(+) + H2O = L-histidine + 2 NADH + 3 H(+). It participates in amino-acid biosynthesis; L-histidine biosynthesis; L-histidine from 5-phospho-alpha-D-ribose 1-diphosphate: step 9/9. In terms of biological role, catalyzes the sequential NAD-dependent oxidations of L-histidinol to L-histidinaldehyde and then to L-histidine. In Listeria monocytogenes serovar 1/2a (strain ATCC BAA-679 / EGD-e), this protein is Histidinol dehydrogenase.